Here is a 219-residue protein sequence, read N- to C-terminus: Proteasome subunit beta type-9 (219 aa).

The propeptide at 1-20 is removed in mature form; it reads MLRAGAPTAGSFRTEEVHTG. Thr21 acts as the Nucleophile in catalysis. Lys53 and Lys109 each carry N6-acetyllysine.

Belongs to the peptidase T1B family. As to quaternary structure, the 26S proteasome consists of a 20S proteasome core and two 19S regulatory subunits. The 20S proteasome core is composed of 28 subunits that are arranged in four stacked rings, resulting in a barrel-shaped structure. The two end rings are each formed by seven alpha subunits, and the two central rings are each formed by seven beta subunits. The catalytic chamber with the active sites is on the inside of the barrel. Component of the immunoproteasome, where it displaces the equivalent housekeeping subunit PSMB6. Component of the spermatoproteasome, a form of the proteasome specifically found in testis. Autocleaved. The resulting N-terminal Thr residue of the mature subunit is responsible for the nucleophile proteolytic activity.

The protein localises to the cytoplasm. The protein resides in the nucleus. The enzyme catalyses Cleavage of peptide bonds with very broad specificity.. The proteasome is a multicatalytic proteinase complex which is characterized by its ability to cleave peptides with Arg, Phe, Tyr, Leu, and Glu adjacent to the leaving group at neutral or slightly basic pH. The proteasome has an ATP-dependent proteolytic activity. This subunit is involved in antigen processing to generate class I binding peptides. The protein is Proteasome subunit beta type-9 (Psmb9) of Mus spicilegus (Steppe mouse).